We begin with the raw amino-acid sequence, 154 residues long: Large ribosomal subunit protein uL15 (154 aa).

The interval 1 to 57 (MRFQDLHPQAGSRRRKRRIGRGIAAGQGASGGFGMRGQKSRSGRPTRPGFEGGQNPL) is disordered. Positions 23–35 (IAAGQGASGGFGM) are enriched in gly residues.

The protein belongs to the universal ribosomal protein uL15 family. In terms of assembly, part of the 50S ribosomal subunit.

Binds to the 23S rRNA. This chain is Large ribosomal subunit protein uL15, found in Thermosynechococcus vestitus (strain NIES-2133 / IAM M-273 / BP-1).